We begin with the raw amino-acid sequence, 390 residues long: Leu/Ile/Val-binding protein homolog 6 (390 aa).

Residues 1-21 (MKKIALTALAVFSLAASAAYA) form the signal peptide.

The protein belongs to the leucine-binding protein family.

Component of an amino-acid transport system. This is Leu/Ile/Val-binding protein homolog 6 from Brucella abortus (strain 2308).